Reading from the N-terminus, the 129-residue chain is MARKQQTRKRRVKKNIESGIAHIRSTFNNTIVTITDMQGNAVSWSSAGALGFRGSRKSTPFAAQMAAETAAKTSLEHGLKTLEVTVKGPGAGREAAIRALQAAGLEVTAIKDVTPVPHNGCRPPKRRRV.

This sequence belongs to the universal ribosomal protein uS11 family. Part of the 30S ribosomal subunit. Interacts with proteins S7 and S18. Binds to IF-3.

Located on the platform of the 30S subunit, it bridges several disparate RNA helices of the 16S rRNA. Forms part of the Shine-Dalgarno cleft in the 70S ribosome. This is Small ribosomal subunit protein uS11 from Lysinibacillus sphaericus (strain C3-41).